The primary structure comprises 166 residues: Large ribosomal subunit protein bL9 (166 aa).

Belongs to the bacterial ribosomal protein bL9 family.

Its function is as follows. Binds to the 23S rRNA. This is Large ribosomal subunit protein bL9 from Psychrobacter arcticus (strain DSM 17307 / VKM B-2377 / 273-4).